The sequence spans 911 residues: Alpha-actinin-4 (911 aa).

An actin-binding region spans residues Met-1 to Ser-269. The disordered stretch occupies residues Asn-8–Tyr-31. The tract at residues Gln-12–Gly-26 is interaction with VCL. Tyr-31 carries the phosphotyrosine modification. The tract at residues Arg-40 to Asn-61 is interaction with VCL. 2 consecutive Calponin-homology (CH) domains span residues Lys-50 to Ala-154 and Thr-163 to Ser-269. Positions Leu-84–Leu-88 match the LXXLL motif motif. The tract at residues Lys-108–Leu-126 is interaction with VCL. Lys-114 bears the N6-acetyllysine mark. Residues Thr-177–Trp-192 are polyphosphoinositide (PIP2)-binding. Lys-214 bears the N6-acetyllysine mark. Thr-249 carries the phosphothreonine modification. Spectrin repeat units lie at residues His-293 to Asn-403, His-413 to Lys-518, Gln-528 to Glu-639, and His-649 to Asn-752. An N6-acetyllysine mark is found at Lys-592 and Lys-625. Ser-696 bears the Phosphoserine mark. The interval Trp-736–Leu-911 is mediates interaction with MICALL2. 2 consecutive EF-hand domains span residues Glu-765–Asp-800 and Gln-806–Asp-841. Asp-778 contacts Ca(2+). Residue Lys-779 is modified to N6-acetyllysine. 2 residues coordinate Ca(2+): Asp-780 and Glu-789. Lys-859 bears the N6-acetyllysine mark. The residue at position 909 (Ser-909) is a Phosphoserine.

It belongs to the alpha-actinin family. In terms of assembly, homodimer; antiparallel. Identified in a IGF2BP1-dependent mRNP granule complex containing untranslated mRNAs. Component of the CART complex, at least composed of ACTN4, HGS/HRS, MYO5B and TRIM3. Binds TRIM3 at the N-terminus. Interacts with MAGI1. Interacts with PDLIM2. Identified in a complex with CASK, IQGAP1, MAGI2, NPHS1, SPTAN1 and SPTBN1. Interacts with MICALL2 (preferentially in opened conformation); stimulated by RAB13 activation. Interacts with PPARG and RARA. Binds to VCL; this interaction triggers VCL conformational changes. Interacts with SEPTIN14. Interacts with IGSF8.

Its subcellular location is the nucleus. It is found in the cytoplasm. The protein localises to the cell junction. It localises to the cytoskeleton. The protein resides in the stress fiber. Its subcellular location is the perinuclear region. F-actin cross-linking protein which is thought to anchor actin to a variety of intracellular structures. This is a bundling protein. Probably involved in vesicular trafficking via its association with the CART complex. The CART complex is necessary for efficient transferrin receptor recycling but not for EGFR degradation. Involved in tight junction assembly in epithelial cells probably through interaction with MICALL2. Links MICALL2 to the actin cytoskeleton and recruits it to the tight junctions. May also function as a transcriptional coactivator, stimulating transcription mediated by the nuclear hormone receptors PPARG and RARA. Association with IGSF8 regulates the immune synapse formation and is required for efficient T-cell activation. The chain is Alpha-actinin-4 from Bos taurus (Bovine).